We begin with the raw amino-acid sequence, 291 residues long: Ribosomal RNA small subunit methyltransferase I (291 aa).

The protein belongs to the methyltransferase superfamily. RsmI family.

The protein localises to the cytoplasm. It catalyses the reaction cytidine(1402) in 16S rRNA + S-adenosyl-L-methionine = 2'-O-methylcytidine(1402) in 16S rRNA + S-adenosyl-L-homocysteine + H(+). Its function is as follows. Catalyzes the 2'-O-methylation of the ribose of cytidine 1402 (C1402) in 16S rRNA. The sequence is that of Ribosomal RNA small subunit methyltransferase I from Neisseria meningitidis serogroup A / serotype 4A (strain DSM 15465 / Z2491).